A 335-amino-acid polypeptide reads, in one-letter code: MSPSATDTTEVMDPTILTLRKVLTSESEPLGRRFRALFSLKHLACLQPPTEKTLPAIQAIAAAFTSPSALLKHELAYCLGQTRNPASLPFLQQVAKDTEQDTMCRHEAAEALGALGYEDSLEILKALRDNQNEPEVIRETCDIAVDRILWENSEARKAEKLKTSDFTSIDPAPPLPMTASEPSIPEIEQTLLDTSLPLFLRYRAMFALRDLASPPDLPTATRAVEALAKGLKDPSALFRHEIAFVFGQLCHPASIPSLTEALSNQSEAGMVRHEAAEALGSLGDYEGVEETLRKFLNDPEQVVRDSVIVALDMAEYEKNGEVEYALVPDAGVAAA.

HEAT-like PBS-type repeat units follow at residues 71 to 97 (LKHELAYCLGQTRNPASLPFLQQVAKD), 104 to 130 (CRHEAAEALGALGYEDSLEILKALRDN), 200 to 233 (LRYRAMFALRDLASPPDLPTATRAVEALAKGLKD), 238 to 264 (FRHEIAFVFGQLCHPASIPSLTEALSN), and 271 to 298 (VRHEAAEALGSLGDYEGVEETLRKFLND). Positions 73, 74, 106, and 107 each coordinate Fe cation. Fe cation-binding residues include H240, E241, H273, and E274.

This sequence belongs to the deoxyhypusine hydroxylase family. Fe(2+) serves as cofactor.

The protein resides in the cytoplasm. It is found in the nucleus. It carries out the reaction [eIF5A protein]-deoxyhypusine + AH2 + O2 = [eIF5A protein]-hypusine + A + H2O. It participates in protein modification; eIF5A hypusination. In terms of biological role, catalyzes the hydroxylation of the N(6)-(4-aminobutyl)-L-lysine intermediate to form hypusine, an essential post-translational modification only found in mature eIF-5A factor. The sequence is that of Deoxyhypusine hydroxylase (lia1) from Aspergillus fumigatus (strain ATCC MYA-4609 / CBS 101355 / FGSC A1100 / Af293) (Neosartorya fumigata).